A 75-amino-acid polypeptide reads, in one-letter code: MRFFLFPYERFQLHQPLFLFFSICFLTLRMKERLLRYNLRYLYALRNVFGTFYSNQRSNQNVATLSKEPFLVFSF.

This is an uncharacterized protein from Saccharomyces cerevisiae (strain ATCC 204508 / S288c) (Baker's yeast).